Consider the following 248-residue polypeptide: Probable transcriptional regulatory protein PLES_43501 (248 aa).

The protein belongs to the TACO1 family.

Its subcellular location is the cytoplasm. The chain is Probable transcriptional regulatory protein PLES_43501 from Pseudomonas aeruginosa (strain LESB58).